Here is a 438-residue protein sequence, read N- to C-terminus: Enolase (438 aa).

His-159 and Glu-168 together coordinate substrate. Glu-211 functions as the Proton donor in the catalytic mechanism. 3 residues coordinate Mg(2+): Asp-246, Glu-297, and Asp-322. Positions 297 and 322 each coordinate substrate. Lys-347 functions as the Proton acceptor in the catalytic mechanism. Substrate is bound by residues 374–377 (SHRS) and Lys-398.

This sequence belongs to the enolase family. As to quaternary structure, homodimer. It depends on Mg(2+) as a cofactor.

The protein resides in the cytoplasm. It catalyses the reaction (2R)-2-phosphoglycerate = phosphoenolpyruvate + H2O. Its pathway is carbohydrate degradation; glycolysis; pyruvate from D-glyceraldehyde 3-phosphate: step 4/5. The chain is Enolase (enoA) from Aspergillus fumigatus (strain ATCC MYA-4609 / CBS 101355 / FGSC A1100 / Af293) (Neosartorya fumigata).